The sequence spans 657 residues: MINVTLPDGSKREYAEGASPLDVAESISKSLAKKALAAKVDGQMWDLVRPLEGDASVAIITDRDPEGLELIRHDAAHVLAQAVQELYPDTQVTIGPVIDDGFYYDFARKEPFSTDDFDKIEARMREIVDADYPIVREVLGKDEAIATFKSLGEEYKAQIIDDIIPPGEQITVYRQGKWFDLCRGPHLPSTGKLPKAFKLMKLAGAYWRGDHRNEMLQRMYGTAWANEKDLKDHLTRLEEAEKRDHRKLGAQLDLFHFQPEAQGSVFWHPKGFMIWRELEAYIRRQQDADGYVEVKTPQLLNSVFWEKSGHWSKFRENMFVVPDEIPSTESDAPILSGEGELMALKPMNCPAHVQIFKNAQRSYRDLPIRMAEFGCCHRNEAHGALHGLMRVRQMTQDDAHIFCREDQIADETLRFLKLFETVYGDFGLSEISYKLATRPEMRAGTDETWDRAEKALADALTAAGMTFSIAEGEGAFYGPKLEFHLTDAIGRTWQCGTFQLDYVLPERLDAEYTGSDGAKHRPVMLHRAVFGTFERFMGILIENYAGSFPLWMSPVQVVVAAITDAAGDYAEEAAAALRKAGLRVEVDKRNETINYKVREHSVQKVPVIAVVGAREAEDRKLALRRLGSNGQQIISLDEALVALADEARAPDLKRARS.

The 61-residue stretch at 1 to 61 folds into the TGS domain; sequence MINVTLPDGS…EGDASVAIIT (61 aa). Residues 244-549 form a catalytic region; it reads DHRKLGAQLD…LIENYAGSFP (306 aa). 3 residues coordinate Zn(2+): cysteine 349, histidine 400, and histidine 526.

Belongs to the class-II aminoacyl-tRNA synthetase family. In terms of assembly, homodimer. Zn(2+) serves as cofactor.

The protein resides in the cytoplasm. It carries out the reaction tRNA(Thr) + L-threonine + ATP = L-threonyl-tRNA(Thr) + AMP + diphosphate + H(+). Its function is as follows. Catalyzes the attachment of threonine to tRNA(Thr) in a two-step reaction: L-threonine is first activated by ATP to form Thr-AMP and then transferred to the acceptor end of tRNA(Thr). Also edits incorrectly charged L-seryl-tRNA(Thr). The chain is Threonine--tRNA ligase from Hyphomonas neptunium (strain ATCC 15444).